A 275-amino-acid polypeptide reads, in one-letter code: Translation initiation factor 2 subunit alpha (275 aa).

In terms of domain architecture, S1 motif spans 12-83 (GEFVVATVKR…RKGHIDLSLR (72 aa)).

It belongs to the eIF-2-alpha family. In terms of assembly, heterotrimer composed of an alpha, a beta and a gamma chain.

Functionally, eIF-2 functions in the early steps of protein synthesis by forming a ternary complex with GTP and initiator tRNA. The sequence is that of Translation initiation factor 2 subunit alpha (eif2a) from Pyrococcus abyssi (strain GE5 / Orsay).